Here is an 84-residue protein sequence, read N- to C-terminus: Small ribosomal subunit protein uS17 (84 aa).

Belongs to the universal ribosomal protein uS17 family. Part of the 30S ribosomal subunit.

Functionally, one of the primary rRNA binding proteins, it binds specifically to the 5'-end of 16S ribosomal RNA. This chain is Small ribosomal subunit protein uS17, found in Citrobacter koseri (strain ATCC BAA-895 / CDC 4225-83 / SGSC4696).